The sequence spans 248 residues: tRNA (guanine-N(1)-)-methyltransferase (248 aa).

S-adenosyl-L-methionine contacts are provided by residues G113 and 133–138 (IGDYVL).

The protein belongs to the RNA methyltransferase TrmD family. In terms of assembly, homodimer.

The protein resides in the cytoplasm. The catalysed reaction is guanosine(37) in tRNA + S-adenosyl-L-methionine = N(1)-methylguanosine(37) in tRNA + S-adenosyl-L-homocysteine + H(+). Its function is as follows. Specifically methylates guanosine-37 in various tRNAs. This is tRNA (guanine-N(1)-)-methyltransferase from Shewanella halifaxensis (strain HAW-EB4).